The sequence spans 254 residues: MAAAKRIADEPAFVLHSYDWSESSLILEVFCRHQGRVALVAKGAKKPSSNFRPVLLPLQPLWLSYALAADGNADIHTLKGAEWVGGHVMPTGDALLSGLYLNELLLRLLARSDPHAALFDAYTGVVRVLASEHGDALEPVLRSFELLLLRAIGLLPSLAAQTMTLAPLQADTRYTLVPEGGLRAAAAAERAALPGHQWQVLQHALDDAASHQATVRACAPVCAELKPQLRTLLQYHCGSPMLRTRQLMIDLQAL.

It belongs to the RecO family.

Involved in DNA repair and RecF pathway recombination. The chain is DNA repair protein RecO from Verminephrobacter eiseniae (strain EF01-2).